A 167-amino-acid chain; its full sequence is G/U mismatch-specific DNA glycosylase (167 aa).

This sequence belongs to the uracil-DNA glycosylase (UDG) superfamily. TDG/mug family. Binds DNA as a monomer.

Its subcellular location is the cytoplasm. It carries out the reaction Specifically hydrolyzes mismatched double-stranded DNA and polynucleotides, releasing free uracil.. Excises ethenocytosine and uracil, which can arise by alkylation or deamination of cytosine, respectively, from the corresponding mispairs with guanine in ds-DNA. It is capable of hydrolyzing the carbon-nitrogen bond between the sugar-phosphate backbone of the DNA and the mispaired base. The complementary strand guanine functions in substrate recognition. Required for DNA damage lesion repair in stationary-phase cells. This Pectobacterium atrosepticum (strain SCRI 1043 / ATCC BAA-672) (Erwinia carotovora subsp. atroseptica) protein is G/U mismatch-specific DNA glycosylase.